Consider the following 360-residue polypeptide: Cyclin-D1-binding protein 1 (360 aa).

The residue at position 2 (Ala2) is an N-acetylalanine. Interaction with TCF3 regions lie at residues 2 to 184 and 150 to 360; these read ASAT…VDFV and ISYN…ELEL. 2 interaction with RPLP0 regions span residues 2–190 and 240–360; these read ASAT…AHEE and LIIP…ELEL. A required for interaction with CCND1 region spans residues 2–208; the sequence is ASATAPAAAV…DPYSGLLNDT (207 aa).

Belongs to the CCNDBP1 family. In terms of assembly, interacts with CCND1 and GRAP2. May also interact with COPS5, RPLP0, SIRT6, SYF2 and TCF3. In terms of processing, phosphorylated. In terms of tissue distribution, ubiquitously expressed. Expression is down-regulated in a variety of tumor types including breast, colon, prostate and rectal tumors, and is up-regulated in certain hepatic carcinomas.

It localises to the cytoplasm. Its subcellular location is the nucleus. May negatively regulate cell cycle progression. May act at least in part via inhibition of the cyclin-D1/CDK4 complex, thereby preventing phosphorylation of RB1 and blocking E2F-dependent transcription. In Homo sapiens (Human), this protein is Cyclin-D1-binding protein 1 (CCNDBP1).